The chain runs to 344 residues: MAPGLTQTADAMSTVTITKPSLPSVQDSDRAYVTFLAGNGDYVKGVVGLAKGLRKVKSAYPLVVAMLPDVPEEHRRILVDQGCIVREIEPVYPPENQTQFAMAYYVINYSKLRIWKFVEYSKMIYLDGDIQVYENIDHLFDLPDGYLYAVMDCFCEKTWSHTPQYKIRYCQQCPDKVQWPKAELGEPPALYFNAGMFLYEPNLETYEDLLRTLKITPPTPFAEQDFLNMYFKKIYKPIPLVYNLVLAMLWRHPENVELGKVKVVHYCAAGSKPWRYTGKEANMEREDIKMLVKKWWDIYDDESLDYKKPVTVVDTEVDLVNLKPFITALTEAGRLNYVTAPSAA.

Lys-111 is a catalytic residue. Mn(2+) contacts are provided by Asp-127, Asp-129, and His-265.

Belongs to the glycosyltransferase 8 family. Galactosyltransferase subfamily. A divalent metal cation is required as a cofactor. Accumulates in mature seeds. Expressed in seedlings (axes and cotyledons), meristems, vascular tissues and emerging lateral roots. Present in abscission zones.

The protein localises to the cytoplasm. It catalyses the reaction myo-inositol + UDP-alpha-D-galactose = alpha-D-galactosyl-(1-&gt;3)-1D-myo-inositol + UDP + H(+). Functionally, galactinol synthase involved in the biosynthesis of raffinose family oligosaccharides (RFOs) that function as osmoprotectants. Promotes plant stress tolerance such as heat, chilling, salinity and methylviologen (MV), a superoxide radical generating drug, by mediating raffinose accumulation, an osmoprotective substance. This chain is Galactinol synthase 1 (GOLS1), found in Arabidopsis thaliana (Mouse-ear cress).